The following is a 393-amino-acid chain: Anhydro-N-acetylmuramic acid kinase (393 aa).

An ATP-binding site is contributed by 9–16 (GTSADGVD).

Belongs to the anhydro-N-acetylmuramic acid kinase family.

It catalyses the reaction 1,6-anhydro-N-acetyl-beta-muramate + ATP + H2O = N-acetyl-D-muramate 6-phosphate + ADP + H(+). Its pathway is amino-sugar metabolism; 1,6-anhydro-N-acetylmuramate degradation. It functions in the pathway cell wall biogenesis; peptidoglycan recycling. Catalyzes the specific phosphorylation of 1,6-anhydro-N-acetylmuramic acid (anhMurNAc) with the simultaneous cleavage of the 1,6-anhydro ring, generating MurNAc-6-P. Is required for the utilization of anhMurNAc either imported from the medium or derived from its own cell wall murein, and thus plays a role in cell wall recycling. In Acidithiobacillus ferrooxidans (strain ATCC 23270 / DSM 14882 / CIP 104768 / NCIMB 8455) (Ferrobacillus ferrooxidans (strain ATCC 23270)), this protein is Anhydro-N-acetylmuramic acid kinase.